Here is a 495-residue protein sequence, read N- to C-terminus: GTPase Der (495 aa).

EngA-type G domains follow at residues 3–166 and 208–381; these read PVIA…MDAE and IKLA…DCST. GTP contacts are provided by residues 9-16, 56-60, 118-121, 214-221, 261-265, and 326-329; these read GRPNVGKS, DTGGI, NKTD, DTAGV, and NKWD. Residues 382 to 466 enclose the KH-like domain; the sequence is KRVGTSLLTR…PIRIQFKEGE (85 aa).

It belongs to the TRAFAC class TrmE-Era-EngA-EngB-Septin-like GTPase superfamily. EngA (Der) GTPase family. In terms of assembly, associates with the 50S ribosomal subunit.

In terms of biological role, GTPase that plays an essential role in the late steps of ribosome biogenesis. The protein is GTPase Der of Yersinia pseudotuberculosis serotype IB (strain PB1/+).